The sequence spans 287 residues: Cell wall protein PIR5 (287 aa).

The first 21 residues, 1–21 (MHYKKAFLASLLSSIALTAYA), serve as a signal peptide directing secretion. A propeptide spanning residues 22–62 (PPEPWATLTPSSKMDGGTTEYRTSFGLAVIPFTVTESKVKR) is cleaved from the precursor. PIR1/2/3 repeat units follow at residues 62-80 (RNVISQINDGQVQVTTQKL), 81-99 (PHPVSQIGDGQIQVTTQKV), 104-122 (SHIVSQIGDGQLQITTAKN), and 144-162 (ATAVSQIHDGQVQVTISSA).

This sequence belongs to the PIR protein family. Covalently linked to beta-1,3-glucan of the inner cell wall layer via an alkali-sensitive ester linkage between the gamma-carboxyl group of glutamic acids, arising from specific glutamines within the PIR1/2/3 repeats, and hydroxyl groups of glucoses of beta-1,3-glucan chains.

The protein resides in the secreted. The protein localises to the cell wall. Component of the outer cell wall layer. May be involved in meiosis and sporulation. The protein is Cell wall protein PIR5 (PIR5) of Saccharomyces cerevisiae (strain RM11-1a) (Baker's yeast).